Here is a 283-residue protein sequence, read N- to C-terminus: Light-independent protochlorophyllide reductase iron-sulfur ATP-binding protein (283 aa).

ATP contacts are provided by residues 15–20 (GIGKST) and Lys-44. Ser-19 lines the Mg(2+) pocket. [4Fe-4S] cluster contacts are provided by Cys-100 and Cys-134. Residue 185–186 (NR) participates in ATP binding.

It belongs to the NifH/BchL/ChlL family. As to quaternary structure, homodimer. Protochlorophyllide reductase is composed of three subunits; ChlL, ChlN and ChlB. The cofactor is [4Fe-4S] cluster.

The catalysed reaction is chlorophyllide a + oxidized 2[4Fe-4S]-[ferredoxin] + 2 ADP + 2 phosphate = protochlorophyllide a + reduced 2[4Fe-4S]-[ferredoxin] + 2 ATP + 2 H2O. The protein operates within porphyrin-containing compound metabolism; chlorophyll biosynthesis (light-independent). Functionally, component of the dark-operative protochlorophyllide reductase (DPOR) that uses Mg-ATP and reduced ferredoxin to reduce ring D of protochlorophyllide (Pchlide) to form chlorophyllide a (Chlide). This reaction is light-independent. The L component serves as a unique electron donor to the NB-component of the complex, and binds Mg-ATP. The protein is Light-independent protochlorophyllide reductase iron-sulfur ATP-binding protein of Synechococcus sp. (strain JA-3-3Ab) (Cyanobacteria bacterium Yellowstone A-Prime).